The sequence spans 459 residues: Exodeoxyribonuclease 7 large subunit (459 aa).

The protein belongs to the XseA family. As to quaternary structure, heterooligomer composed of large and small subunits.

It is found in the cytoplasm. It catalyses the reaction Exonucleolytic cleavage in either 5'- to 3'- or 3'- to 5'-direction to yield nucleoside 5'-phosphates.. Bidirectionally degrades single-stranded DNA into large acid-insoluble oligonucleotides, which are then degraded further into small acid-soluble oligonucleotides. This Pseudomonas fluorescens (strain SBW25) protein is Exodeoxyribonuclease 7 large subunit.